A 138-amino-acid chain; its full sequence is Cellular retinoic acid-binding protein 2 (138 aa).

The Nuclear localization signal signature appears at 21 to 31; it reads KVLGVNVMLRK. K102 is covalently cross-linked (Glycyl lysine isopeptide (Lys-Gly) (interchain with G-Cter in SUMO)). An all-trans-retinoate-binding site is contributed by 133–135; the sequence is RVY.

This sequence belongs to the calycin superfamily. Fatty-acid binding protein (FABP) family. As to quaternary structure, interacts with RXR and RARA. Interacts with importin alpha. In terms of processing, sumoylated in response to retinoic acid binding, sumoylation is critical for dissociation from ER and subsequent nuclear translocation.

It localises to the cytoplasm. The protein localises to the endoplasmic reticulum. The protein resides in the nucleus. Its function is as follows. Transports retinoic acid to the nucleus. Regulates the access of retinoic acid to the nuclear retinoic acid receptors. The protein is Cellular retinoic acid-binding protein 2 (CRABP2) of Homo sapiens (Human).